The primary structure comprises 1004 residues: Protein phosphatase 1 regulatory subunit 12A (1004 aa).

Residues 35 to 38 form an important for interaction with PPP1CB region; that stretch reads KVKF. 6 ANK repeats span residues 39–68, 72–101, 105–134, 138–164, 198–227, and 231–260; these read DDGAVFLAACSSGDTEEVLRLLERGADINY, DGLTALHQACIDDNVDMVKFLVENGANINQ, EGWIPLHAAASCGYLDIAEYLISQGAHVGA, EGDTPLDIAEEEAMEELLQNEVNRQGV, SGGTALHVAAAKGYTEVLKLLIQARYDVNI, and DGWTPLHAAAHWGKEEACRILVENLCDMEA. Residues 291-300 show a composition bias toward basic and acidic residues; that stretch reads HSEKREKKSP. Residues 291-920 form a disordered region; sequence HSEKREKKSP…SYLEDRKPYC (630 aa). Polar residues predominate over residues 302–316; sequence IESTANLDNNQTQKT. Composition is skewed to basic and acidic residues over residues 318–329 and 336–353; these read KNKETLIMEQEK and SLEHEKADEEEEGKKDES. The span at 357–369 shows a compositional bias: acidic residues; the sequence is SEEEEDDDSESEA. The segment covering 378-392 has biased composition (polar residues); the sequence is ANANTTSTQSASMTA. Residues 417–427 show a composition bias toward basic and acidic residues; it reads SPKEEERKDES. A compositionally biased stretch (low complexity) spans 464–475; it reads RSASSPRLSSSL. The segment covering 476 to 486 has biased composition (basic and acidic residues); that stretch reads DNKEKEKDGKG. Residues 514 to 525 show a composition bias toward low complexity; that stretch reads SSASSIRSGSSY. Over residues 528-538 the composition is skewed to basic and acidic residues; that stretch reads RKWEEDVKKNS. Residues 539–554 are compositionally biased toward polar residues; it reads LNEGPTSLNTSYQRSG. Composition is skewed to low complexity over residues 564-578 and 587-602; these read VSSNVPSTASTVTSS and ASANTTTKSTTGSTSA. Basic and acidic residues predominate over residues 613–624; it reads WAEDSTEKEKDS. Residues 625–659 are compositionally biased toward low complexity; the sequence is VPTAVTVPVAPSVVNAAATTTAMTTATSGTVSSTS. Residues 672-681 are compositionally biased toward basic and acidic residues; that stretch reads VRDEESESQR. Residues 682 to 692 are compositionally biased toward basic residues; that stretch reads KARSRQARQSR. T695 is subject to Phosphothreonine; by ROCK2. The segment covering 717–765 has biased composition (basic and acidic residues); that stretch reads RTREQENEEKEKEEKEKQDKEKQEEKKESETKDDDYRQRYSRTVEEPYH. Low complexity predominate over residues 770–793; sequence TSTSTSTSSTSSLSTSTSSLSSSS. Residues 794–808 are compositionally biased toward polar residues; sequence QLNRPNSLIGITSAY. Over residues 812–837 the composition is skewed to basic and acidic residues; sequence GTKESEREGGKKEEEKEEDKSQPKSI. Positions 838-849 are enriched in basic residues; the sequence is RERRRPREKRRS. Position 850 is a phosphothreonine; by ROCK2 (T850). Basic and acidic residues predominate over residues 864-880; it reads QEHQSDSEEGTNKKETQ. Polar residues predominate over residues 881 to 896; the sequence is SDSLSRYDTGSLSVSS.

PP1 comprises a catalytic subunit, PPP1CA, PPP1CB or PPP1CC, and one or several targeting or regulatory subunits. PPP1R12A mediates binding to myosin. Post-translationally, phosphorylated by CIT (Rho-associated kinase) and by ROCK2 on serine and threonine residues. Phosphorylation at Thr-695 leads to inhibition of myosin phosphatase activity. Phosphorylation at Thr-850 abolishes myosin binding. May be phosphorylated at Thr-695 by DMPK; may inhibit the myosin phosphatase activity. As to expression, detected in brain, lung, aorta, heart, gizzard, stomach, oviduct, spleen, kidney and small intestine.

Its subcellular location is the cytoplasm. It is found in the cytoskeleton. The protein localises to the stress fiber. Regulates myosin phosphatase activity. The chain is Protein phosphatase 1 regulatory subunit 12A (PPP1R12A) from Gallus gallus (Chicken).